The chain runs to 233 residues: B-cell lymphoma/leukemia 10 (233 aa).

Methionine 1 is subject to N-acetylmethionine. In terms of domain architecture, CARD spans 13-101 (LTEVKKDALE…QNFLIQKITD (89 aa)). Glycyl lysine isopeptide (Lys-Gly) (interchain with G-Cter in ubiquitin) cross-links involve residues lysine 17, lysine 31, and lysine 63. Position 138 is a phosphoserine (serine 138). The disordered stretch occupies residues 187 to 233 (FSSTTLPRPGDPGAPPLPPDLQLEEEGTCANSSEMFLPLRSRTVSRQ). Positions 195-205 (PGDPGAPPLPP) are enriched in pro residues.

As to quaternary structure, homomultimer; homooligomerized following recruitment by CARD domain-containing proteins that form a nucleating helical template that recruits BCL10 via CARD-CARD interaction. Self-associates by CARD-CARD interaction and interacts with other CARD-proteins such as CARD9, CARD10, CARD11 and CARD14. Forms a complex with CARD14 and MALT1; resulting in the formation of a CBM (CARD14-BCL10-MALT1) complex. Forms a complex with CARD11 and MALT1; resulting in the formation of a CBM (CARD11-BCL10-MALT1) complex. Forms a complex with CARD9 and MALT1; resulting in the formation of a CBM (CARD9-BCL10-MALT1) complex. Found in a membrane raft complex, at least composed of BCL10, CARD11, DPP4 and IKBKB. Binds caspase-9 with its C-terminal domain. Interacts with TRAF2 and BIRC2/c-IAP2. Interacts with PELI2 and SOCS3; these interactions may be mutually exclusive. Phosphorylated. Phosphorylation results in dissociation from TRAF2 and binding to BIRC2/c-IAP2. Phosphorylated by IKBKB/IKKB. Post-translationally, ubiquitinated via both 'Lys-63'-linked and linear ('Met-1'-linked) polyubiquitin chains in response to T-cell receptor (TCR) activation. Ubiquitination is recognized by IKBKG/NEMO, the regulatory subunit of I-kappa-B kinase (IKK), and is required for TCR-induced NF-kappa-B activation. Linear ubiquitination at Lys-17, Lys-31 and Lys-63 is mediated by RNF31/HOIP; linear ubiquitination is recognized with much higher affinity than 'Lys-63'-linked ubiquitin by IKBKG/NEMO. CARD11 is required for linear ubiquitination by HOIP by promoting the targeting of BCL10 to RNF31/HOIP. In terms of processing, proteolytically cleaved by MALT1; required for T-cell activation. Ubiquitous.

The protein resides in the cytoplasm. The protein localises to the perinuclear region. Its subcellular location is the membrane raft. Functionally, plays a key role in both adaptive and innate immune signaling by bridging CARD domain-containing proteins to immune activation. Acts by channeling adaptive and innate immune signaling downstream of CARD domain-containing proteins CARD9, CARD11 and CARD14 to activate NF-kappa-B and MAP kinase p38 (MAPK11, MAPK12, MAPK13 and/or MAPK14) pathways which stimulate expression of genes encoding pro-inflammatory cytokines and chemokines. Recruited by activated CARD domain-containing proteins: homooligomerized CARD domain-containing proteins form a nucleating helical template that recruits BCL10 via CARD-CARD interaction, thereby promoting polymerization of BCL10, subsequent recruitment of MALT1 and formation of a CBM complex. This leads to activation of NF-kappa-B and MAP kinase p38 (MAPK11, MAPK12, MAPK13 and/or MAPK14) pathways which stimulate expression of genes encoding pro-inflammatory cytokines and chemokines. Activated by CARD9 downstream of C-type lectin receptors; CARD9-mediated signals are essential for antifungal immunity. Activated by CARD11 downstream of T-cell receptor (TCR) and B-cell receptor (BCR). Promotes apoptosis, pro-caspase-9 maturation and activation of NF-kappa-B via NIK and IKK. The sequence is that of B-cell lymphoma/leukemia 10 from Homo sapiens (Human).